A 217-amino-acid chain; its full sequence is Pyrophosphatase PpaX (217 aa).

Aspartate 11 acts as the Nucleophile in catalysis.

This sequence belongs to the HAD-like hydrolase superfamily. PpaX family. It depends on Mg(2+) as a cofactor.

The enzyme catalyses diphosphate + H2O = 2 phosphate + H(+). In terms of biological role, hydrolyzes pyrophosphate formed during P-Ser-HPr dephosphorylation by HPrK/P. Might play a role in controlling the intracellular pyrophosphate pool. The protein is Pyrophosphatase PpaX of Listeria innocua serovar 6a (strain ATCC BAA-680 / CLIP 11262).